A 309-amino-acid polypeptide reads, in one-letter code: Probable porphobilinogen deaminase (309 aa).

Cys-233 bears the S-(dipyrrolylmethanemethyl)cysteine mark.

Belongs to the HMBS family. Requires dipyrromethane as cofactor.

The catalysed reaction is 4 porphobilinogen + H2O = hydroxymethylbilane + 4 NH4(+). Its pathway is porphyrin-containing compound metabolism; protoporphyrin-IX biosynthesis; coproporphyrinogen-III from 5-aminolevulinate: step 2/4. Its function is as follows. Tetrapolymerization of the monopyrrole PBG into the hydroxymethylbilane pre-uroporphyrinogen in several discrete steps. The chain is Probable porphobilinogen deaminase from Methanococcoides burtonii (strain DSM 6242 / NBRC 107633 / OCM 468 / ACE-M).